We begin with the raw amino-acid sequence, 101 residues long: UPF0060 membrane protein ACIAD1364 (101 aa).

The next 3 helical transmembrane spans lie at W24 to P44, I50 to D70, and I79 to L99.

The protein belongs to the UPF0060 family.

It localises to the cell inner membrane. This Acinetobacter baylyi (strain ATCC 33305 / BD413 / ADP1) protein is UPF0060 membrane protein ACIAD1364.